The sequence spans 601 residues: Molybdenum cofactor synthesis protein cinnamon (601 aa).

The interval 3 to 153 (SITFGVLTIS…TISALLPHAV (151 aa)) is MPT adenylyltransferase. The interval 173–195 (SAQKSHICPHKTGTGTDSDRNSP) is disordered. Positions 184 to 596 (TGTGTDSDRN…FPASVLRFDF (413 aa)) are MPT Mo-transferase. S376 is modified (phosphoserine).

It in the N-terminal section; belongs to the MoaB/Mog family. In the C-terminal section; belongs to the MoeA family. Mg(2+) is required as a cofactor.

It carries out the reaction molybdopterin + ATP + H(+) = adenylyl-molybdopterin + diphosphate. It catalyses the reaction adenylyl-molybdopterin + molybdate = Mo-molybdopterin + AMP + H(+). It functions in the pathway cofactor biosynthesis; molybdopterin biosynthesis. Its function is as follows. Catalyzes two steps in the biosynthesis of the molybdenum cofactor. In the first step, molybdopterin is adenylated. Subsequently, molybdate is inserted into adenylated molybdopterin and AMP is released. The protein is Molybdenum cofactor synthesis protein cinnamon (cin) of Drosophila melanogaster (Fruit fly).